Here is a 173-residue protein sequence, read N- to C-terminus: Cell division protein SepF (173 aa).

Residues 31 to 82 (FEDFDEPLDERPSRNRSPRDDSRNNAVTDSSDHSPSRNERRSPAPAPATADL) form a disordered region. Basic and acidic residues-rich tracts occupy residues 39–53 (DERP…DDSR) and 60–72 (SSDH…ERRS).

The protein belongs to the SepF family. As to quaternary structure, homodimer. Interacts with FtsZ.

It is found in the cytoplasm. Its function is as follows. Cell division protein that is part of the divisome complex and is recruited early to the Z-ring. Probably stimulates Z-ring formation, perhaps through the cross-linking of FtsZ protofilaments. Its function overlaps with FtsA. This Thermobifida fusca (strain YX) protein is Cell division protein SepF.